Consider the following 34-residue polypeptide: uncharacterized protein (34 aa).

A helical membrane pass occupies residues 10–30; the sequence is LIITSSFFAIAVVLVLSVLLI.

It is found in the membrane. This is an uncharacterized protein from Escherichia coli O157:H7.